Here is a 473-residue protein sequence, read N- to C-terminus: Trehalose-6-phosphate synthase (473 aa).

Arg-10 lines the D-glucose 6-phosphate pocket. 21-22 is a UDP-alpha-D-glucose binding site; the sequence is GG. D-glucose 6-phosphate contacts are provided by Tyr-76 and Asp-130. Arg-262 and Lys-267 together coordinate UDP-alpha-D-glucose. A D-glucose 6-phosphate-binding site is contributed by Arg-300. UDP-alpha-D-glucose-binding positions include Phe-339 and 365–369; that span reads LVAKE.

This sequence belongs to the glycosyltransferase 20 family. Homotetramer.

It catalyses the reaction D-glucose 6-phosphate + UDP-alpha-D-glucose = alpha,alpha-trehalose 6-phosphate + UDP + H(+). It functions in the pathway glycan biosynthesis; trehalose biosynthesis. Its function is as follows. Probably involved in the osmoprotection via the biosynthesis of trehalose. Catalyzes the transfer of glucose from UDP-alpha-D-glucose (UDP-Glc) to D-glucose 6-phosphate (Glc-6-P) to form trehalose-6-phosphate. Acts with retention of the anomeric configuration of the UDP-sugar donor. The sequence is that of Trehalose-6-phosphate synthase (otsA) from Salmonella arizonae (strain ATCC BAA-731 / CDC346-86 / RSK2980).